A 363-amino-acid chain; its full sequence is UDP-N-acetylglucosamine--N-acetylmuramyl-(pentapeptide) pyrophosphoryl-undecaprenol N-acetylglucosamine transferase (363 aa).

UDP-N-acetyl-alpha-D-glucosamine-binding positions include 14–16 (TGG), R171, S200, and Q290.

This sequence belongs to the glycosyltransferase 28 family. MurG subfamily.

The protein resides in the cell inner membrane. The enzyme catalyses di-trans,octa-cis-undecaprenyl diphospho-N-acetyl-alpha-D-muramoyl-L-alanyl-D-glutamyl-meso-2,6-diaminopimeloyl-D-alanyl-D-alanine + UDP-N-acetyl-alpha-D-glucosamine = di-trans,octa-cis-undecaprenyl diphospho-[N-acetyl-alpha-D-glucosaminyl-(1-&gt;4)]-N-acetyl-alpha-D-muramoyl-L-alanyl-D-glutamyl-meso-2,6-diaminopimeloyl-D-alanyl-D-alanine + UDP + H(+). It functions in the pathway cell wall biogenesis; peptidoglycan biosynthesis. Its function is as follows. Cell wall formation. Catalyzes the transfer of a GlcNAc subunit on undecaprenyl-pyrophosphoryl-MurNAc-pentapeptide (lipid intermediate I) to form undecaprenyl-pyrophosphoryl-MurNAc-(pentapeptide)GlcNAc (lipid intermediate II). The protein is UDP-N-acetylglucosamine--N-acetylmuramyl-(pentapeptide) pyrophosphoryl-undecaprenol N-acetylglucosamine transferase of Borrelia garinii subsp. bavariensis (strain ATCC BAA-2496 / DSM 23469 / PBi) (Borreliella bavariensis).